Reading from the N-terminus, the 563-residue chain is Phospholipase B-like protein F (563 aa).

The N-terminal stretch at 1-21 is a signal peptide; sequence MKIINSFVFIFVLLFVFNTNA. 7 N-linked (GlcNAc...) asparagine glycosylation sites follow: asparagine 85, asparagine 107, asparagine 118, asparagine 121, asparagine 208, asparagine 312, and asparagine 537.

Belongs to the phospholipase B-like family.

It localises to the secreted. Its function is as follows. Probable phospholipase. This Dictyostelium discoideum (Social amoeba) protein is Phospholipase B-like protein F (plbF).